A 563-amino-acid polypeptide reads, in one-letter code: Arginine--tRNA ligase (563 aa).

The short motif at 122-132 is the 'HIGH' region element; that stretch reads PNIAKPISMGH.

Belongs to the class-I aminoacyl-tRNA synthetase family. As to quaternary structure, monomer.

Its subcellular location is the cytoplasm. It catalyses the reaction tRNA(Arg) + L-arginine + ATP = L-arginyl-tRNA(Arg) + AMP + diphosphate. The polypeptide is Arginine--tRNA ligase (Enterococcus faecalis (strain ATCC 700802 / V583)).